We begin with the raw amino-acid sequence, 170 residues long: Protein SprT (170 aa).

The 142-residue stretch at 22–163 (LQQANLTLQT…RCRRCGKTLR (142 aa)) folds into the SprT-like domain. Residue His78 participates in Zn(2+) binding. Glu79 is an active-site residue. His82 is a binding site for Zn(2+).

This sequence belongs to the SprT family. It depends on Zn(2+) as a cofactor.

Its subcellular location is the cytoplasm. In Pectobacterium carotovorum subsp. carotovorum (strain PC1), this protein is Protein SprT.